The sequence spans 146 residues: 1,4-dihydroxy-2-naphthoyl-CoA hydrolase (146 aa).

The active site involves D15.

It belongs to the 4-hydroxybenzoyl-CoA thioesterase family. DHNA-CoA hydrolase subfamily.

It carries out the reaction 1,4-dihydroxy-2-naphthoyl-CoA + H2O = 1,4-dihydroxy-2-naphthoate + CoA + H(+). Its pathway is cofactor biosynthesis; phylloquinone biosynthesis. The protein operates within quinol/quinone metabolism; 1,4-dihydroxy-2-naphthoate biosynthesis; 1,4-dihydroxy-2-naphthoate from chorismate: step 7/7. Its function is as follows. Catalyzes the hydrolysis of 1,4-dihydroxy-2-naphthoyl-CoA (DHNA-CoA) to 1,4-dihydroxy-2-naphthoate (DHNA), a reaction involved in phylloquinone (vitamin K1) biosynthesis. This Picosynechococcus sp. (strain ATCC 27264 / PCC 7002 / PR-6) (Agmenellum quadruplicatum) protein is 1,4-dihydroxy-2-naphthoyl-CoA hydrolase.